Here is a 228-residue protein sequence, read N- to C-terminus: Sec-independent protein translocase protein TatB (228 aa).

A helical membrane pass occupies residues methionine 1–glycine 21. Disordered regions lie at residues aspartate 109–aspartate 162 and proline 197–serine 228. Residues alanine 206 to serine 228 are compositionally biased toward basic residues.

It belongs to the TatB family. As to quaternary structure, the Tat system comprises two distinct complexes: a TatABC complex, containing multiple copies of TatA, TatB and TatC subunits, and a separate TatA complex, containing only TatA subunits. Substrates initially bind to the TatABC complex, which probably triggers association of the separate TatA complex to form the active translocon.

It localises to the cell inner membrane. In terms of biological role, part of the twin-arginine translocation (Tat) system that transports large folded proteins containing a characteristic twin-arginine motif in their signal peptide across membranes. Together with TatC, TatB is part of a receptor directly interacting with Tat signal peptides. TatB may form an oligomeric binding site that transiently accommodates folded Tat precursor proteins before their translocation. In Neisseria meningitidis serogroup B (strain ATCC BAA-335 / MC58), this protein is Sec-independent protein translocase protein TatB.